A 499-amino-acid chain; its full sequence is Phenylalanine--tRNA ligase alpha subunit (499 aa).

Residues T342, 381 to 383, and F422 each bind L-phenylalanine; that span reads QID. E424 lines the Mg(2+) pocket. Residue F447 coordinates L-phenylalanine.

Belongs to the class-II aminoacyl-tRNA synthetase family. Phe-tRNA synthetase alpha subunit type 2 subfamily. As to quaternary structure, tetramer of two alpha and two beta subunits. The cofactor is Mg(2+).

The protein resides in the cytoplasm. The catalysed reaction is tRNA(Phe) + L-phenylalanine + ATP = L-phenylalanyl-tRNA(Phe) + AMP + diphosphate + H(+). In Pyrococcus horikoshii (strain ATCC 700860 / DSM 12428 / JCM 9974 / NBRC 100139 / OT-3), this protein is Phenylalanine--tRNA ligase alpha subunit.